We begin with the raw amino-acid sequence, 464 residues long: Multifunctional dye peroxidase DyP2 (464 aa).

Asp203 functions as the Proton acceptor in the catalytic mechanism. Mn(2+) is bound by residues Glu258, Glu273, and Glu284. Heme is bound at residue His321.

The protein belongs to the DyP-type peroxidase family. Exists both as a monomeric and oligomeric species in solution; the monomeric form contains no bound heme cofactor and is inactive. Heme b serves as cofactor. The cofactor is Mn(2+).

Its subcellular location is the secreted. It carries out the reaction 1-(4-hydroxy-3-methoxyphenyl)-2-(2-methoxyphenoxy)propane-1,3-diol + H2O2 = guaiacol + vanillin + glycolaldehyde + H2O. It catalyses the reaction 2 Mn(2+) + H2O2 + 2 H(+) = 2 Mn(3+) + 2 H2O. The enzyme catalyses 2 a phenolic donor + H2O2 = 2 a phenolic radical donor + 2 H2O. The catalysed reaction is Reactive Blue 5 + 2 H2O2 = 2,2'-disulfonyl azobenzene + 3-[(4-amino-6-chloro-1,3,5-triazin-2-yl)amino]benzenesulfonate + phthalate + 2 H2O + 2 H(+). In terms of biological role, displays both high peroxidase and manganese peroxidase activity. Is likely involved in lignin degradation. Also has a Mn-dependent oxidase mode of action that expands its substrate scope in vitro; is thus able to catalyze the O(2)- and Mn-dependent oxidative decarboxylation of 4-methoxymandelate to anisaldehyde. This is Multifunctional dye peroxidase DyP2 from Amycolatopsis sp. (strain ATCC 39116 / 75iv2).